The following is a 191-amino-acid chain: Large ribosomal subunit protein uL5 (191 aa).

The protein belongs to the universal ribosomal protein uL5 family. As to quaternary structure, part of the 50S ribosomal subunit; part of the 5S rRNA/L5/L18/L25 subcomplex. Contacts the 5S rRNA and the P site tRNA. Forms a bridge to the 30S subunit in the 70S ribosome.

In terms of biological role, this is one of the proteins that bind and probably mediate the attachment of the 5S RNA into the large ribosomal subunit, where it forms part of the central protuberance. In the 70S ribosome it contacts protein S13 of the 30S subunit (bridge B1b), connecting the 2 subunits; this bridge is implicated in subunit movement. Contacts the P site tRNA; the 5S rRNA and some of its associated proteins might help stabilize positioning of ribosome-bound tRNAs. The protein is Large ribosomal subunit protein uL5 of Micrococcus luteus (strain ATCC 4698 / DSM 20030 / JCM 1464 / CCM 169 / CCUG 5858 / IAM 1056 / NBRC 3333 / NCIMB 9278 / NCTC 2665 / VKM Ac-2230) (Micrococcus lysodeikticus).